A 570-amino-acid polypeptide reads, in one-letter code: Phosphocholine hydrolase Lem3 (570 aa).

It is found in the secreted. The protein resides in the host cytoplasm. It carries out the reaction [Rab1 protein]-O-phosphocholine-L-serine + H2O = [Rab1 protein]-L-serine + phosphocholine + H(+). Virulence effector that plays a role in hijacking the host vesicular trafficking by recruiting the small guanosine triphosphatase (GTPase) Rab1 to the cytosolic face of the Legionella-containing vacuole (LCVs). Acts as a phosphocholine hydrolase by mediating the hydrolysis of phosphocholine to Ser residues of host RAB1 (RAB1A, RAB1B or RAB1C). Dephosphocholination of target proteins restores accessibility to GTPase effector LepB. Can act on both GDP-bound and GTP-bound Rab proteins. This is Phosphocholine hydrolase Lem3 (lem3) from Legionella pneumophila subsp. pneumophila (strain Philadelphia 1 / ATCC 33152 / DSM 7513).